The primary structure comprises 80 residues: RNA-binding protein Hfq (80 aa).

The Sm domain occupies 10–69; the sequence is DPFLNTLRREHVPVSIYLVNGIKLQGQIESFDQYVVLLKNTVTQMVYKHAISTVVPARPV.

It belongs to the Hfq family. In terms of assembly, homohexamer.

Functionally, RNA chaperone that binds small regulatory RNA (sRNAs) and mRNAs to facilitate mRNA translational regulation in response to envelope stress, environmental stress and changes in metabolite concentrations. Also binds with high specificity to tRNAs. This Azoarcus sp. (strain BH72) protein is RNA-binding protein Hfq.